Consider the following 201-residue polypeptide: NADH-quinone oxidoreductase subunit C (201 aa).

This sequence belongs to the complex I 30 kDa subunit family. In terms of assembly, NDH-1 is composed of 14 different subunits. Subunits NuoB, C, D, E, F, and G constitute the peripheral sector of the complex.

It is found in the cell inner membrane. The enzyme catalyses a quinone + NADH + 5 H(+)(in) = a quinol + NAD(+) + 4 H(+)(out). In terms of biological role, NDH-1 shuttles electrons from NADH, via FMN and iron-sulfur (Fe-S) centers, to quinones in the respiratory chain. The immediate electron acceptor for the enzyme in this species is believed to be ubiquinone. Couples the redox reaction to proton translocation (for every two electrons transferred, four hydrogen ions are translocated across the cytoplasmic membrane), and thus conserves the redox energy in a proton gradient. The polypeptide is NADH-quinone oxidoreductase subunit C (Azoarcus sp. (strain BH72)).